We begin with the raw amino-acid sequence, 372 residues long: Alanine dehydrogenase (372 aa).

Substrate contacts are provided by Arg15 and Lys75. The active-site Proton donor/acceptor is His96. NAD(+) contacts are provided by residues Ser134, 178–179 (TA), Asp198, Ser220, 239–240 (VL), 266–269 (IAID), Arg279, and 298–301 (VANM). The active-site Proton donor/acceptor is Asp269.

The protein belongs to the AlaDH/PNT family. Homohexamer.

It is found in the cytoplasm. The enzyme catalyses L-alanine + NAD(+) + H2O = pyruvate + NH4(+) + NADH + H(+). It functions in the pathway amino-acid degradation; L-alanine degradation via dehydrogenase pathway; NH(3) and pyruvate from L-alanine: step 1/1. In terms of biological role, catalyzes the reversible reductive amination of pyruvate to L-alanine. A key factor in the assimilation of L-alanine as an energy source via the tricarboxylic acid cycle during sporulation. In Geobacillus stearothermophilus (Bacillus stearothermophilus), this protein is Alanine dehydrogenase (ald).